The following is a 626-amino-acid chain: DNA-directed RNA polymerase subunit gamma (626 aa).

Zn(2+) is bound by residues C71, C73, C86, and C89. Mg(2+)-binding residues include D467, D469, and D471.

The protein belongs to the RNA polymerase beta' chain family. RpoC1 subfamily. As to quaternary structure, in cyanobacteria the RNAP catalytic core is composed of 2 alpha, 1 beta, 1 beta', 1 gamma and 1 omega subunit. When a sigma factor is associated with the core the holoenzyme is formed, which can initiate transcription. It depends on Mg(2+) as a cofactor. Zn(2+) is required as a cofactor.

The catalysed reaction is RNA(n) + a ribonucleoside 5'-triphosphate = RNA(n+1) + diphosphate. DNA-dependent RNA polymerase catalyzes the transcription of DNA into RNA using the four ribonucleoside triphosphates as substrates. The chain is DNA-directed RNA polymerase subunit gamma from Microcystis aeruginosa (strain NIES-843 / IAM M-2473).